The following is a 106-amino-acid chain: Small membrane A-kinase anchor protein (106 aa).

The N-myristoyl glycine moiety is linked to residue glycine 2. Residue cysteine 3 is the site of S-palmitoyl cysteine attachment. Serine 40 carries the post-translational modification Phosphoserine. Positions alanine 62–cysteine 85 are PKA-RI-binding. Serine 98 is modified (phosphoserine).

Belongs to the small membrane AKAP family. Interacts with PKA type I regulatory subunits PRKAR1A and PRKAR1B. Also binds to type II regulatory subunits, but at a tenfold lower affinity. Post-translationally, may be palmitoylated at Cys-3. As to expression, widely expressed, with very low levels in spleen and liver.

Its subcellular location is the cell membrane. Its function is as follows. Binds to type I regulatory subunits of protein kinase A (PKA-RI) and may anchor/target them to the plasma membrane. This is Small membrane A-kinase anchor protein from Mus musculus (Mouse).